The primary structure comprises 125 residues: Histone H1-like protein HC1 (125 aa).

This sequence belongs to the histone H1/H5 family. HCT subfamily.

Might have a role analogous to that of eukaryotic histone proteins. The chain is Histone H1-like protein HC1 (hctA) from Chlamydia muridarum (strain MoPn / Nigg).